We begin with the raw amino-acid sequence, 894 residues long: Phosphoenolpyruvate carboxylase (894 aa).

Catalysis depends on residues His143 and Lys556.

This sequence belongs to the PEPCase type 1 family. The cofactor is Mg(2+).

It carries out the reaction oxaloacetate + phosphate = phosphoenolpyruvate + hydrogencarbonate. Functionally, forms oxaloacetate, a four-carbon dicarboxylic acid source for the tricarboxylic acid cycle. This is Phosphoenolpyruvate carboxylase from Acinetobacter baumannii (strain ATCC 17978 / DSM 105126 / CIP 53.77 / LMG 1025 / NCDC KC755 / 5377).